The sequence spans 203 residues: LexA repressor 2 (203 aa).

Residues 28-48 constitute a DNA-binding region (H-T-H motif); sequence MREIARHLNVNGTLGVAKHLE. Residues Ser122 and Lys159 each act as for autocatalytic cleavage activity in the active site.

Belongs to the peptidase S24 family. Homodimer.

The catalysed reaction is Hydrolysis of Ala-|-Gly bond in repressor LexA.. Functionally, represses a number of genes involved in the response to DNA damage (SOS response), including recA and lexA. In the presence of single-stranded DNA, RecA interacts with LexA causing an autocatalytic cleavage which disrupts the DNA-binding part of LexA, leading to derepression of the SOS regulon and eventually DNA repair. The sequence is that of LexA repressor 2 from Geobacter sulfurreducens (strain ATCC 51573 / DSM 12127 / PCA).